Here is a 192-residue protein sequence, read N- to C-terminus: Phosphoheptose isomerase (192 aa).

An SIS domain is found at isoleucine 37 to lysine 192. Asparagine 52 to glycine 54 is a substrate binding site. Positions 61 and 65 each coordinate Zn(2+). Residues glutamate 65, asparagine 93–aspartate 94, serine 119–serine 121, serine 124, and glutamine 172 each bind substrate. Zn(2+)-binding residues include glutamine 172 and histidine 180.

The protein belongs to the SIS family. GmhA subfamily. In terms of assembly, homotetramer. Zn(2+) is required as a cofactor.

The protein localises to the cytoplasm. It catalyses the reaction 2 D-sedoheptulose 7-phosphate = D-glycero-alpha-D-manno-heptose 7-phosphate + D-glycero-beta-D-manno-heptose 7-phosphate. It functions in the pathway carbohydrate biosynthesis; D-glycero-D-manno-heptose 7-phosphate biosynthesis; D-glycero-alpha-D-manno-heptose 7-phosphate and D-glycero-beta-D-manno-heptose 7-phosphate from sedoheptulose 7-phosphate: step 1/1. Catalyzes the isomerization of sedoheptulose 7-phosphate in D-glycero-D-manno-heptose 7-phosphate. In Glaesserella parasuis serovar 5 (strain SH0165) (Haemophilus parasuis), this protein is Phosphoheptose isomerase.